The sequence spans 410 residues: Segmentation protein fushi tarazu (410 aa).

3 disordered regions span residues 71 to 93 (TQTV…KAED), 138 to 157 (PAVS…QEYV), and 175 to 221 (SPQS…SAVS). Pro residues predominate over residues 76–85 (PVQPTTPPPK). A compositionally biased stretch (pro residues) spans 190-199 (TPPPTTPTSL). Residues 254–313 (SKRTRQTYTRYQTLELEKEFHFNRYITRRRRIDIANALSLSERQIKIWFQNRRMKSKKDR) constitute a DNA-binding region (homeobox).

Belongs to the Antp homeobox family. In terms of processing, phosphorylated at as many as 16 sites. In terms of tissue distribution, expressed early in development in a striped pattern at the blastoderm stage. Later expressed in a specific subset of neuronal precursor cells, neurons and glia in the developing CNS. Between 5 and 6 hours of development, found in the midline precursor-2 cells in a segmentally repeating pattern. Expression in many other neuronal precursors follows and reaches a second peak of abundance at 9 hours of development. Expressed in the hindgut between 11-15 hours of development.

It is found in the nucleus. Its function is as follows. May play a role in determining neuronal identity, may be directly involved in specifying identity of individual neurons. Required during embryogenesis for the process of body segmentation. Homeotic protein, required in alternating segment primordia, it specifies the correct number of segments. This is Segmentation protein fushi tarazu (ftz) from Drosophila melanogaster (Fruit fly).